The chain runs to 241 residues: Tubulin-like protein alpha-4B (241 aa).

Residues 1 to 10 (MRHQQTERQD) show a composition bias toward basic and acidic residues. Positions 1–20 (MRHQQTERQDPSQPLSRQHG) are disordered. A GTP-binding site is contributed by Asp10. A Mg(2+)-binding site is contributed by Asp10. Positions 11 to 20 (PSQPLSRQHG) are enriched in polar residues. Ser79, Gly83, Thr84, Thr118, Asn145, and Asn167 together coordinate GTP. The active site involves Glu193.

It belongs to the tubulin family. The cofactor is Mg(2+). Post-translationally, some glutamate residues at the C-terminus are polyglutamylated, resulting in polyglutamate chains on the gamma-carboxyl group. Polyglutamylation plays a key role in microtubule severing by spastin (SPAST). SPAST preferentially recognizes and acts on microtubules decorated with short polyglutamate tails: severing activity by SPAST increases as the number of glutamates per tubulin rises from one to eight, but decreases beyond this glutamylation threshold. Glutamylation is also involved in cilia motility. In terms of processing, some glutamate residues at the C-terminus are monoglycylated but not polyglycylated due to the absence of functional TTLL10 in human. Monoglycylation is mainly limited to tubulin incorporated into cilia and flagella axonemes, which is required for their stability and maintenance. Flagella glycylation controls sperm motility. Both polyglutamylation and monoglycylation can coexist on the same protein on adjacent residues, and lowering glycylation levels increases polyglutamylation, and reciprocally.

It localises to the cytoplasm. It is found in the cytoskeleton. It carries out the reaction GTP + H2O = GDP + phosphate + H(+). In terms of biological role, tubulin is the major constituent of microtubules, a cylinder consisting of laterally associated linear protofilaments composed ofalpha- and beta-tubulin heterodimers. The protein is Tubulin-like protein alpha-4B (TUBA4B) of Homo sapiens (Human).